A 231-amino-acid polypeptide reads, in one-letter code: Ureidoacrylate amidohydrolase RutB (231 aa).

Catalysis depends on D25, which acts as the Proton acceptor. The active site involves K134. C167 serves as the catalytic Nucleophile.

This sequence belongs to the isochorismatase family. RutB subfamily.

The enzyme catalyses (Z)-3-ureidoacrylate + H2O + H(+) = (Z)-3-aminoacrylate + NH4(+) + CO2. The catalysed reaction is (Z)-3-ureidoacrylate + H2O = (Z)-3-aminoacrylate + carbamate + H(+). It carries out the reaction (Z)-2-methylureidoacrylate + H2O + H(+) = (Z)-2-methylaminoacrylate + NH4(+) + CO2. Hydrolyzes ureidoacrylate to form aminoacrylate and carbamate. The carbamate hydrolyzes spontaneously, thereby releasing one of the nitrogen atoms of the pyrimidine ring as ammonia and one of its carbon atoms as CO2. The polypeptide is Ureidoacrylate amidohydrolase RutB (Escherichia coli (strain SMS-3-5 / SECEC)).